The primary structure comprises 337 residues: tRNA N6-adenosine threonylcarbamoyltransferase (337 aa).

Fe cation contacts are provided by H111 and H115. Substrate-binding positions include L134 to G138, D167, G180, and N272. Residue D300 participates in Fe cation binding.

It belongs to the KAE1 / TsaD family. It depends on Fe(2+) as a cofactor.

It localises to the cytoplasm. The catalysed reaction is L-threonylcarbamoyladenylate + adenosine(37) in tRNA = N(6)-L-threonylcarbamoyladenosine(37) in tRNA + AMP + H(+). Required for the formation of a threonylcarbamoyl group on adenosine at position 37 (t(6)A37) in tRNAs that read codons beginning with adenine. Is involved in the transfer of the threonylcarbamoyl moiety of threonylcarbamoyl-AMP (TC-AMP) to the N6 group of A37, together with TsaE and TsaB. TsaD likely plays a direct catalytic role in this reaction. The sequence is that of tRNA N6-adenosine threonylcarbamoyltransferase from Shewanella woodyi (strain ATCC 51908 / MS32).